The chain runs to 221 residues: Thiamine-phosphate synthase (221 aa).

4-amino-2-methyl-5-(diphosphooxymethyl)pyrimidine contacts are provided by residues 46–50 and Asn83; that span reads QFREK. Mg(2+)-binding residues include Asp84 and Asp103. Position 122 (Ser122) interacts with 4-amino-2-methyl-5-(diphosphooxymethyl)pyrimidine. 149–151 contributes to the 2-[(2R,5Z)-2-carboxy-4-methylthiazol-5(2H)-ylidene]ethyl phosphate binding site; sequence TQS. Position 152 (Lys152) interacts with 4-amino-2-methyl-5-(diphosphooxymethyl)pyrimidine. 2-[(2R,5Z)-2-carboxy-4-methylthiazol-5(2H)-ylidene]ethyl phosphate-binding positions include Gly181 and 201–202; that span reads IS.

This sequence belongs to the thiamine-phosphate synthase family. Mg(2+) is required as a cofactor.

The enzyme catalyses 2-[(2R,5Z)-2-carboxy-4-methylthiazol-5(2H)-ylidene]ethyl phosphate + 4-amino-2-methyl-5-(diphosphooxymethyl)pyrimidine + 2 H(+) = thiamine phosphate + CO2 + diphosphate. It carries out the reaction 2-(2-carboxy-4-methylthiazol-5-yl)ethyl phosphate + 4-amino-2-methyl-5-(diphosphooxymethyl)pyrimidine + 2 H(+) = thiamine phosphate + CO2 + diphosphate. It catalyses the reaction 4-methyl-5-(2-phosphooxyethyl)-thiazole + 4-amino-2-methyl-5-(diphosphooxymethyl)pyrimidine + H(+) = thiamine phosphate + diphosphate. Its pathway is cofactor biosynthesis; thiamine diphosphate biosynthesis; thiamine phosphate from 4-amino-2-methyl-5-diphosphomethylpyrimidine and 4-methyl-5-(2-phosphoethyl)-thiazole: step 1/1. In terms of biological role, condenses 4-methyl-5-(beta-hydroxyethyl)thiazole monophosphate (THZ-P) and 2-methyl-4-amino-5-hydroxymethyl pyrimidine pyrophosphate (HMP-PP) to form thiamine monophosphate (TMP). The protein is Thiamine-phosphate synthase of Actinobacillus succinogenes (strain ATCC 55618 / DSM 22257 / CCUG 43843 / 130Z).